The chain runs to 80 residues: Growth factor (80 aa).

An N-terminal signal peptide occupies residues 1–19 (MATRNLVASLLCIMYAVHA). The EGF-like domain occupies 29-73 (HVKVCNHDYENYCLNNGTCFTIALDNVSITPFCVCRINYEGSRCQ). 3 disulfides stabilise this stretch: C33-C47, C41-C61, and C63-C72. N-linked (GlcNAc...) asparagine; by host glycans are attached at residues N44 and N54.

Its subcellular location is the secreted. In Oryctolagus cuniculus (Rabbit), this protein is Growth factor.